Reading from the N-terminus, the 140-residue chain is MKRKHKRLLFVLASFCAAGCALLFILSELRESVSFFYTTSELLSGPQRESNLPVRVGGMVVKGSIARSTDSISFDLTDFKTELNVVYSGMLPPLFGEGVGAVVKGRLLHGKFVADEVLAKHDEKYMPKKYTAPKSSPEPK.

Residues 1–7 (MKRKHKR) are Cytoplasmic-facing. The helical; Signal-anchor for type II membrane protein transmembrane segment at 8–28 (LLFVLASFCAAGCALLFILSE) threads the bilayer. Topologically, residues 29-140 (LRESVSFFYT…TAPKSSPEPK (112 aa)) are periplasmic. Positions 121 and 125 each coordinate heme.

It belongs to the CcmE/CycJ family.

It localises to the cell inner membrane. Functionally, heme chaperone required for the biogenesis of c-type cytochromes. Transiently binds heme delivered by CcmC and transfers the heme to apo-cytochromes in a process facilitated by CcmF and CcmH. In Anaplasma marginale (strain St. Maries), this protein is Cytochrome c-type biogenesis protein CcmE.